The primary structure comprises 920 residues: Whirlin (920 aa).

The region spanning 141–224 (LVSLRRAKAH…LVLSVYSAGR (84 aa)) is the PDZ 1 domain. Residues 241–262 (QGRSTSPPSSLPHGSTLRQHED) form a disordered region. The span at 242–257 (GRSTSPPSSLPHGSTL) shows a compositional bias: polar residues. Residues 278–360 (KVNLVLGDGR…LILTVKDVGR (83 aa)) form the PDZ 2 domain. Disordered stretches follow at residues 502 to 536 (MKAR…TSTT), 561 to 603 (CETT…QGHD), 630 to 730 (FSAP…AMGA), and 752 to 828 (RALP…PTST). The span at 520–536 (SYSDTGSSTGSHGTSTT) shows a compositional bias: low complexity. The span at 561–570 (CETTQGSTNA) shows a compositional bias: polar residues. Composition is skewed to pro residues over residues 589-598 (IKPPPPPPPL) and 636-651 (RSPP…PTPG). Polar residues predominate over residues 655–674 (ARDSPSSPIYASISHANPSS). Residue Ser698 is modified to Phosphoserine. Polar residues-rich tracts occupy residues 756–775 (QTRT…TLSE) and 785–800 (EAST…NTKN). The span at 802-813 (NGKELPQTERTT) shows a compositional bias: basic and acidic residues. The 84-residue stretch at 829-912 (LIRVRKSAAT…TKERDYIDFL (84 aa)) folds into the PDZ 3 domain.

In terms of assembly, forms homooligomers. Interacts (via C-terminal PDZ domain) with MYO15A; this interaction is necessary for localization of WHRN to stereocilia tips. Interacts (via C-terminal PDZ domain) with MPP1/p55. Interacts with LRRC4C/NGL1. Interacts with MYO7A. Interacts with RPGR. Interacts with EPS8. Interacts with CASK. Interacts with CIB2. Component of USH2 complex, composed of ADGRV1, PDZD7, USH2A and WHRN. Interacts (via PDZ domains) with PDZD7; the interaction is direct. Interacts (via N-terminal PDZ domain) with USH2A (via cytoplasmic region). Interacts with ADGRV1/MASS1 (via cytoplasmic region). As to expression, ubiquitous. Highly expressed in heart, spleen, lung and liver. Highly expressed in brain, in the olfactory bulb, thalamus, layers III-V of the cerebral cortex and the molecular layer of cerebellum. Detected in soma and dendrites of thalamic neurons, and in cerebrum in cell bodies and apical dendrites of pyramidal neurons. Expressed in retina and inner ear.

It localises to the cytoplasm. The protein resides in the cell projection. It is found in the stereocilium. Its subcellular location is the growth cone. The protein localises to the synapse. Its function is as follows. Involved in hearing and vision as member of the USH2 complex. Necessary for elongation and maintenance of inner and outer hair cell stereocilia in the organ of Corti in the inner ear. Involved in the maintenance of the hair bundle ankle region, which connects stereocilia in cochlear hair cells of the inner ear. In retina photoreceptors, required for the maintenance of periciliary membrane complex that seems to play a role in regulating intracellular protein transport. This is Whirlin from Rattus norvegicus (Rat).